Consider the following 365-residue polypeptide: Peptide chain release factor 2 (365 aa).

Position 252 is an N5-methylglutamine (glutamine 252).

It belongs to the prokaryotic/mitochondrial release factor family. In terms of processing, methylated by PrmC. Methylation increases the termination efficiency of RF2.

It localises to the cytoplasm. Its function is as follows. Peptide chain release factor 2 directs the termination of translation in response to the peptide chain termination codons UGA and UAA. This Pectobacterium atrosepticum (strain SCRI 1043 / ATCC BAA-672) (Erwinia carotovora subsp. atroseptica) protein is Peptide chain release factor 2.